Consider the following 215-residue polypeptide: Adenylate kinase (215 aa).

10–15 (GAGKGT) is a binding site for ATP. Residues 30 to 59 (STGDMLRAAVKAGTELGLKAKSVMDAGNLV) form an NMP region. AMP is bound by residues threonine 31, arginine 36, 57–59 (NLV), 85–88 (GFPR), and glutamine 92. The interval 122–159 (GRRVHEGSGRIYHTIFNPPKVEGVDDVTGESLVQRKDD) is LID. Residues arginine 123 and 132 to 133 (IY) contribute to the ATP site. The AMP site is built by arginine 156 and arginine 167. Glycine 201 is a binding site for ATP.

The protein belongs to the adenylate kinase family. As to quaternary structure, monomer.

Its subcellular location is the cytoplasm. It carries out the reaction AMP + ATP = 2 ADP. Its pathway is purine metabolism; AMP biosynthesis via salvage pathway; AMP from ADP: step 1/1. In terms of biological role, catalyzes the reversible transfer of the terminal phosphate group between ATP and AMP. Plays an important role in cellular energy homeostasis and in adenine nucleotide metabolism. The protein is Adenylate kinase of Pseudomonas syringae pv. tomato (strain ATCC BAA-871 / DC3000).